A 348-amino-acid polypeptide reads, in one-letter code: tRNA N6-adenosine threonylcarbamoyltransferase (348 aa).

Residues histidine 115 and histidine 119 each coordinate Fe cation. Substrate is bound by residues 138–142 (LVSGG), aspartate 171, glycine 184, and asparagine 276. Fe cation is bound at residue aspartate 304.

It belongs to the KAE1 / TsaD family. The cofactor is Fe(2+).

The protein localises to the cytoplasm. It carries out the reaction L-threonylcarbamoyladenylate + adenosine(37) in tRNA = N(6)-L-threonylcarbamoyladenosine(37) in tRNA + AMP + H(+). Functionally, required for the formation of a threonylcarbamoyl group on adenosine at position 37 (t(6)A37) in tRNAs that read codons beginning with adenine. Is involved in the transfer of the threonylcarbamoyl moiety of threonylcarbamoyl-AMP (TC-AMP) to the N6 group of A37, together with TsaE and TsaB. TsaD likely plays a direct catalytic role in this reaction. This chain is tRNA N6-adenosine threonylcarbamoyltransferase, found in Xylella fastidiosa (strain 9a5c).